Here is a 92-residue protein sequence, read N- to C-terminus: PqqA binding protein (92 aa).

Belongs to the PqqD family. In terms of assembly, monomer. Interacts with PqqE.

It participates in cofactor biosynthesis; pyrroloquinoline quinone biosynthesis. Its function is as follows. Functions as a PqqA binding protein and presents PqqA to PqqE, in the pyrroloquinoline quinone (PQQ) biosynthetic pathway. This is PqqA binding protein from Xanthomonas oryzae pv. oryzae (strain MAFF 311018).